The following is a 146-amino-acid chain: Acidic phospholipase A2 2 (146 aa).

A signal peptide spans 1 to 21; the sequence is MNPAHLLILAAVCVSSLGASS. Residues 22–27 constitute a propeptide that is removed on maturation; that stretch reads NRPMPL. 7 disulfides stabilise this stretch: C38/C98, C53/C145, C55/C71, C70/C126, C77/C119, C87/C112, and C105/C117. 3 residues coordinate Ca(2+): Y54, G56, and G58. H74 is an active-site residue. Position 75 (D75) interacts with Ca(2+). Residue D120 is part of the active site.

Belongs to the phospholipase A2 family. Group I subfamily. D49 sub-subfamily. Requires Ca(2+) as cofactor. Expressed by the venom gland.

It localises to the secreted. It carries out the reaction a 1,2-diacyl-sn-glycero-3-phosphocholine + H2O = a 1-acyl-sn-glycero-3-phosphocholine + a fatty acid + H(+). Its function is as follows. PLA2 catalyzes the calcium-dependent hydrolysis of the 2-acyl groups in 3-sn-phosphoglycerides. This is Acidic phospholipase A2 2 from Naja kaouthia (Monocled cobra).